Consider the following 147-residue polypeptide: Sec-independent protein translocase protein TatB (147 aa).

Residues 1–21 (MFDISFSEILVIAAVALIVIG) form a helical membrane-spanning segment. A compositionally biased stretch (basic and acidic residues) spans 67-88 (EETGRSIENSVHTELDKFRETV). The disordered stretch occupies residues 67 to 147 (EETGRSIENS…GVNRERETAE (81 aa)). Low complexity predominate over residues 103 to 117 (APAGESSPPQNSSPA).

The protein belongs to the TatB family. In terms of assembly, the Tat system comprises two distinct complexes: a TatABC complex, containing multiple copies of TatA, TatB and TatC subunits, and a separate TatA complex, containing only TatA subunits. Substrates initially bind to the TatABC complex, which probably triggers association of the separate TatA complex to form the active translocon.

It is found in the cell inner membrane. Functionally, part of the twin-arginine translocation (Tat) system that transports large folded proteins containing a characteristic twin-arginine motif in their signal peptide across membranes. Together with TatC, TatB is part of a receptor directly interacting with Tat signal peptides. TatB may form an oligomeric binding site that transiently accommodates folded Tat precursor proteins before their translocation. This is Sec-independent protein translocase protein TatB from Nitrosospira multiformis (strain ATCC 25196 / NCIMB 11849 / C 71).